The primary structure comprises 136 residues: Fluoride-specific ion channel FluC (136 aa).

A run of 4 helical transmembrane segments spans residues 3 to 23, 46 to 66, 78 to 98, and 109 to 129; these read TLPP…GAVL, ATLA…GVLF, LLIG…SLEV, and FAAL…VFGL. Na(+) contacts are provided by G86 and T89.

It belongs to the fluoride channel Fluc/FEX (TC 1.A.43) family.

It localises to the cell inner membrane. It carries out the reaction fluoride(in) = fluoride(out). Its activity is regulated as follows. Na(+) is not transported, but it plays an essential structural role and its presence is essential for fluoride channel function. In terms of biological role, fluoride-specific ion channel. Important for reducing fluoride concentration in the cell, thus reducing its toxicity. In Erythrobacter litoralis (strain HTCC2594), this protein is Fluoride-specific ion channel FluC.